We begin with the raw amino-acid sequence, 344 residues long: Arginine N-succinyltransferase (344 aa).

Residue leucine 125 coordinates succinyl-CoA. The Proton donor role is filled by histidine 229.

This sequence belongs to the arginine N-succinyltransferase family.

It carries out the reaction succinyl-CoA + L-arginine = N(2)-succinyl-L-arginine + CoA + H(+). The protein operates within amino-acid degradation; L-arginine degradation via AST pathway; L-glutamate and succinate from L-arginine: step 1/5. Catalyzes the transfer of succinyl-CoA to arginine to produce N(2)-succinylarginine. The chain is Arginine N-succinyltransferase from Salmonella typhi.